We begin with the raw amino-acid sequence, 399 residues long: Acetate kinase (399 aa).

Asn7 contacts Mg(2+). Residue Lys14 coordinates ATP. Arg90 lines the substrate pocket. Residue Asp147 is the Proton donor/acceptor of the active site. Residues 207 to 211, 282 to 284, and 330 to 334 contribute to the ATP site; these read HLGNG, DFR, and GIGEN. Residue Glu385 participates in Mg(2+) binding.

Belongs to the acetokinase family. As to quaternary structure, homodimer. Requires Mg(2+) as cofactor. It depends on Mn(2+) as a cofactor.

It is found in the cytoplasm. The catalysed reaction is acetate + ATP = acetyl phosphate + ADP. The protein operates within metabolic intermediate biosynthesis; acetyl-CoA biosynthesis; acetyl-CoA from acetate: step 1/2. Its function is as follows. Catalyzes the formation of acetyl phosphate from acetate and ATP. Can also catalyze the reverse reaction. The chain is Acetate kinase from Caldicellulosiruptor saccharolyticus (strain ATCC 43494 / DSM 8903 / Tp8T 6331).